A 590-amino-acid chain; its full sequence is Arginine--tRNA ligase (590 aa).

A 'HIGH' region motif is present at residues 131–141; sequence PNIAKEMHVGH.

The protein belongs to the class-I aminoacyl-tRNA synthetase family. In terms of assembly, monomer.

The protein resides in the cytoplasm. The catalysed reaction is tRNA(Arg) + L-arginine + ATP = L-arginyl-tRNA(Arg) + AMP + diphosphate. The polypeptide is Arginine--tRNA ligase (Synechococcus sp. (strain RCC307)).